The chain runs to 416 residues: Iron/alpha-ketoglutarate-dependent dioxygenase asqJ (416 aa).

Residues 1-53 are disordered; sequence MGYPKAFTSSDSEPEPDLSRDLGNPVMGNPGVVSRSSSTVAQHSVRNNPTGPD. Over residues 34–50 the composition is skewed to polar residues; the sequence is SRSSSTVAQHSVRNNPT. Fe cation contacts are provided by histidine 242, aspartate 244, and histidine 319.

This sequence belongs to the PhyH family. As to quaternary structure, homodimer. It depends on Fe cation as a cofactor.

The enzyme catalyses (-)-4'-methoxycyclopeptine + 2-oxoglutarate + O2 = (Z)-4'-methoxydehydrocyclopeptine + succinate + CO2 + H2O. The catalysed reaction is (Z)-4'-methoxydehydrocyclopeptine + 2-oxoglutarate + O2 = (-)-4'-methoxycyclopenine + succinate + CO2. It carries out the reaction (-)-cyclopeptine + 2-oxoglutarate + O2 = (Z)-dehydrocyclopeptine + succinate + CO2 + H2O. It catalyses the reaction (Z)-dehydrocyclopeptine + 2-oxoglutarate + O2 = (-)-cyclopenine + succinate + CO2. The protein operates within secondary metabolite biosynthesis. It functions in the pathway alkaloid biosynthesis. It participates in mycotoxin biosynthesis. Its function is as follows. Iron/alpha-ketoglutarate-dependent dioxygenase; part of the gene cluster that mediates the biosynthesis of the aspoquinolone mycotoxins. Within the pathway, the iron/alpha-ketoglutarate-dependent dioxygenase asqJ acts as a (-)-cyclopenine synthase that converts 4'-methoxycyclopeptin into 4'-methoxydehydrocyclopeptin through dehydrogenation to form a double bond between C-alpha and C-beta of the O-methyltyrosine side chain. AsqJ is a very unique dioxygenase which is capable of catalyzing radical-mediated dehydrogenation and epoxidation reactions sequentially on a 6,7-benzo-diazepinedione substrate in the 4'-methoxyviridicatin biosynthetic pathway. AsqJ is also capable of converting cyclopeptin into dehydrocyclopeptin. The first step of the pathway is catalyzed by the nonribosomal peptide synthetase asqK that condenses anthranilic acid and O-methyl-L-tyrosine to produce 4'-methoxycyclopeptin. 4'-methoxycyclopeptin is then converted to 4'-methoxydehydrocyclopeptin by the ketoglutarate-dependent dioxygenase asqJ. AsqJ also converts its first product 4'-methoxydehydrocyclopeptin to 4'-methoxycyclopenin. The following conversion of 4'-methoxycyclopenin into 4'-methoxyviridicatin is catalyzed by the cyclopenase asqI. 4'-methoxyviridicatin is the precursor of quinolone natural products, and is further converted to quinolinone B. The prenyltransferase asqH1 then catalyzes the canonical Friedel-Crafts alkylation of quinolinone B with dimethylallyl cation to yield dimethylallyl quinolone, which is subjected to FAD-dependent dehydrogenation by the FAD-linked oxidoreductase asqF to yield conjugated aryl diene. The delta(3') double bond then serves as the site of the second alkylation with DMAPP catalyzed by the prenyltransferase asqH2 to yield a carbenium ion intermediate, which can be attacked by H(2)O to yield a styrenyl quinolone containing a C3'-hydroxyprenyl chain. The FAD-dependent monooxygenase asqG performs epoxidation of the terminal C7'-C8' olefin. Finally, after dehydratation of the epoxide at C3 by asqC, the quinolone epoxide rearrangement protein asqO catalyzes an enzymatic 3-exo-tet cyclization to yield the cyclopropyl-THF ring system in aspoquinolone. The protein is Iron/alpha-ketoglutarate-dependent dioxygenase asqJ of Emericella nidulans (strain FGSC A4 / ATCC 38163 / CBS 112.46 / NRRL 194 / M139) (Aspergillus nidulans).